We begin with the raw amino-acid sequence, 289 residues long: tRNA (adenine(58)-N(1))-methyltransferase catalytic subunit TRMT61A (289 aa).

N-acetylserine is present on Ser-2. Residues 20 to 22 (LGH), 35 to 42 (QTQTRHGV), 64 to 65 (GW), 85 to 89 (QILYS), and 110 to 117 (SGTGSGSV) each bind substrate. Residues Leu-87, 114 to 116 (SGS), Glu-135, Arg-140, 163 to 164 (DV), and Asp-181 contribute to the S-adenosyl-L-methionine site. Substrate-binding positions include 180–183 (LDIP) and 205–212 (SFSPCIEQ). A disordered region spans residues 245-272 (LPPPDLGTGTDGPAGSDTSPFRSGTPMK). Over residues 250-259 (LGTGTDGPAG) the composition is skewed to low complexity. Residue Ser-263 is modified to Phosphoserine. Position 278 (Thr-278) interacts with substrate.

The protein belongs to the class I-like SAM-binding methyltransferase superfamily. TRM61 family. As to quaternary structure, heterotetramer; composed of two copies of TRMT6 and two copies of TRMT61A.

It is found in the nucleus. The catalysed reaction is adenosine(58) in tRNA + S-adenosyl-L-methionine = N(1)-methyladenosine(58) in tRNA + S-adenosyl-L-homocysteine + H(+). It carries out the reaction an adenosine in mRNA + S-adenosyl-L-methionine = an N(1)-methyladenosine in mRNA + S-adenosyl-L-homocysteine + H(+). Its function is as follows. Catalytic subunit of tRNA (adenine-N(1)-)-methyltransferase, which catalyzes the formation of N(1)-methyladenine at position 58 (m1A58) in initiator methionyl-tRNA. Catalytic subunit of mRNA N(1)-methyltransferase complex, which mediates methylation of adenosine residues at the N(1) position of a small subset of mRNAs: N(1) methylation takes place in tRNA T-loop-like structures of mRNAs and is only present at low stoichiometries. The sequence is that of tRNA (adenine(58)-N(1))-methyltransferase catalytic subunit TRMT61A (TRMT61A) from Homo sapiens (Human).